The primary structure comprises 301 residues: MSHTAEIPLVPGSESPLELKPLKAADPQAVYHRRAHRLLSLAKDSPLADYFELCRRLVSIQAKLAEEADFGQLLAWGKDEATPLSLLGSEADSYWQGLLQQLLSDLLPQVDESIARVMRLLMQQSPEQLSSWGRSLRQGHVSEVPAHFSLFIWAAMGVYWSHWAPMVIKRMDQRKVAQQSMCPVCGCHPVASVIVDQPRAGLRYLHCSLCESEWHYIRAHCTSCGQDKEMTIWSLDDAQAQVRIESCDECHGYTKMMFVENSPSMDVAADDLATLMLDSELNAKGFGATTLNPLLMAHETT.

It belongs to the FdhE family.

Its subcellular location is the cytoplasm. Its function is as follows. Necessary for formate dehydrogenase activity. This Shewanella baltica (strain OS185) protein is Protein FdhE homolog.